The primary structure comprises 614 residues: 1-deoxy-D-xylulose-5-phosphate synthase (614 aa).

Residues His74 and 115–117 contribute to the thiamine diphosphate site; that span reads AHS. Asp146 contributes to the Mg(2+) binding site. Thiamine diphosphate is bound by residues 147–148, Asn175, Tyr282, and Glu363; that span reads GA. Mg(2+) is bound at residue Asn175.

Belongs to the transketolase family. DXPS subfamily. Homodimer. Requires Mg(2+) as cofactor. It depends on thiamine diphosphate as a cofactor.

It catalyses the reaction D-glyceraldehyde 3-phosphate + pyruvate + H(+) = 1-deoxy-D-xylulose 5-phosphate + CO2. Its pathway is metabolic intermediate biosynthesis; 1-deoxy-D-xylulose 5-phosphate biosynthesis; 1-deoxy-D-xylulose 5-phosphate from D-glyceraldehyde 3-phosphate and pyruvate: step 1/1. Functionally, catalyzes the acyloin condensation reaction between C atoms 2 and 3 of pyruvate and glyceraldehyde 3-phosphate to yield 1-deoxy-D-xylulose-5-phosphate (DXP). This Nitrosospira multiformis (strain ATCC 25196 / NCIMB 11849 / C 71) protein is 1-deoxy-D-xylulose-5-phosphate synthase.